The following is a 251-amino-acid chain: Cytochrome P450 monooxygenase ppzG (251 aa).

Residue C250 coordinates heme.

The protein belongs to the cytochrome P450 family. Requires heme as cofactor.

Its pathway is secondary metabolite biosynthesis. Cytochrome P450 monooxygenase; part of the gene cluster that mediates the biosynthesis of pyrrolopyrazines, secondary metabolites showing insecticidal activity. The role of ppzG within the pathway has still to be determined. The single multifunctional NRPS ppzA is sufficient to produce peramine via condensation of 1-pyrroline-5-carboxylate and arginine, N-methylation of the alpha-amino group of arginine and reduction of the thioester and the cyclization to form an iminium ion resulting in release from the peptide synthetase. Deprotonation of this intermediate and oxidation of the pyrroline ring would give rise to peramine. In Epichloe species that produce only peramine, the peramine synthetase gene is not localized in a gene cluster, in contrast to Metarhizium species that contain additional pyrrolopyrazine biosynthesis genes. The 2-oxoglutarate-Fe(II) type oxidoreductase ppzC hydroxylates peramine to yield the newly identified compound 8-hydroxyperamine whereas ppzD converts L-proline into trans-4-hydroxy-L-proline, a precursor of peramine biosynthesis. This chain is Cytochrome P450 monooxygenase ppzG, found in Metarhizium rileyi (strain RCEF 4871) (Nomuraea rileyi).